Reading from the N-terminus, the 343-residue chain is MKHLLSTHDLHRGAAIQILDTAEEMASVTEREVKKLPALRGRTVVNLFFEDSTRTRISFEAAAKRLSADVINFAAKGSSVSKGESLKDTAQTLEAMSADAVVIRHGASGAPQRLADSGWIDAAVINAGDGTHEHPTQALLDAFTMRRHWAKIFGVSSVGSDVAGMRVAIVGDVLHSRVARSNVWLLHTLGAQVTLVAPPTLLPIGVQTWPCAVSFDLDQTLDAGVDAVMMLRVQGERMHAAFFPSEREYSRRWGFDDARLARLDALGLDETIIMHPGPMNRGLEISSAAADSSRSTVLDQVRNGVSVRMAALYLLLSGGLQQPDQSNPQRNVTNTSNWQETKR.

R54 and T55 together coordinate carbamoyl phosphate. K82 provides a ligand contact to L-aspartate. 3 residues coordinate carbamoyl phosphate: R104, H134, and Q137. R177 and R232 together coordinate L-aspartate. Carbamoyl phosphate contacts are provided by G277 and P278. Positions 323-343 (PDQSNPQRNVTNTSNWQETKR) are disordered.

This sequence belongs to the aspartate/ornithine carbamoyltransferase superfamily. ATCase family. Heterododecamer (2C3:3R2) of six catalytic PyrB chains organized as two trimers (C3), and six regulatory PyrI chains organized as three dimers (R2).

The catalysed reaction is carbamoyl phosphate + L-aspartate = N-carbamoyl-L-aspartate + phosphate + H(+). Its pathway is pyrimidine metabolism; UMP biosynthesis via de novo pathway; (S)-dihydroorotate from bicarbonate: step 2/3. In terms of biological role, catalyzes the condensation of carbamoyl phosphate and aspartate to form carbamoyl aspartate and inorganic phosphate, the committed step in the de novo pyrimidine nucleotide biosynthesis pathway. This chain is Aspartate carbamoyltransferase catalytic subunit, found in Renibacterium salmoninarum (strain ATCC 33209 / DSM 20767 / JCM 11484 / NBRC 15589 / NCIMB 2235).